Consider the following 753-residue polypeptide: MAP/microtubule affinity-regulating kinase 3 (753 aa).

The tract at residues 1 to 36 (MSTRTPLPTVNERDTENHTSHGDGRQEVTSRTSRSG) is disordered. A compositionally biased stretch (basic and acidic residues) spans 11-28 (NERDTENHTSHGDGRQEV). A Phosphoserine modification is found at serine 42. The 252-residue stretch at 56–307 (YRLLKTIGKG…LEQIMKDRWI (252 aa)) folds into the Protein kinase domain. ATP-binding positions include 62-70 (IGKGNFAKV) and lysine 85. The active-site Proton acceptor is the aspartate 178. Threonine 211 bears the Phosphothreonine; by LKB1 mark. Positions 326 to 365 (ISDQKRIDIMVGMGYSQEEIQESLSKMKYDEITATYLLLG) constitute a UBA domain. A phosphoserine mark is found at serine 368, serine 374, serine 376, serine 380, serine 383, leucine 384, serine 400, arginine 407, serine 419, and serine 469. A disordered region spans residues 370–600 (ELDASDSSSS…TPLSQTRSRG (231 aa)). A compositionally biased stretch (low complexity) spans 374–385 (SDSSSSSNLSLA). Positions 391-400 (SDLNNSTGQS) are enriched in polar residues. Polar residues-rich tracts occupy residues 490 to 513 (STVP…CSER) and 521 to 548 (VIQN…SSAA). Residues serine 540 and serine 543 each carry the phosphoserine modification. Threonine 549 is subject to Phosphothreonine. The residue at position 564 (threonine 564) is a Phosphothreonine; by PKC/PRKCZ. A phosphoserine mark is found at serine 583, serine 598, serine 601, and serine 643. Polar residues predominate over residues 584 to 600 (PSLSHEATPLSQTRSRG). A disordered region spans residues 632 to 655 (NGRYEGSSRNVSAEQKDENKEAKP). A compositionally biased stretch (basic and acidic residues) spans 645-655 (EQKDENKEAKP). Residues 704-753 (DGHAENLVQWEMEVCKLPRLSLNGVRFKRISGTSIAFKNIASKIANELKL) enclose the KA1 domain.

Belongs to the protein kinase superfamily. CAMK Ser/Thr protein kinase family. SNF1 subfamily. In terms of assembly, interacts with MAPT/TAU. Interacts with DLG5 (via coiled-coil domain). Interacts with STK3/MST2 and STK4/MST1 in the presence of DLG5. Interacts with YWHAB, YWHAG, YWHAQ and YWHAZ. Interacts with PKP2 (via N-terminus). Interacts with CDC25C. Interacts with KSR1. Post-translationally, phosphorylated at Thr-211 by STK11/LKB1 in complex with STE20-related adapter-alpha (STRADA) pseudo kinase and CAB39. Phosphorylation at Thr-564 by PRKCZ/aPKC inhibits the kinase activity. In terms of tissue distribution, ubiquitous.

It is found in the cell membrane. It localises to the cell projection. The protein localises to the dendrite. Its subcellular location is the cytoplasm. It carries out the reaction L-seryl-[protein] + ATP = O-phospho-L-seryl-[protein] + ADP + H(+). The catalysed reaction is L-threonyl-[protein] + ATP = O-phospho-L-threonyl-[protein] + ADP + H(+). Its activity is regulated as follows. Activated by phosphorylation on Thr-211. Inhibited by phosphorylation on Thr-564. Functionally, serine/threonine-protein kinase. Involved in the specific phosphorylation of microtubule-associated proteins for MAP2 and MAP4. Phosphorylates the microtubule-associated protein MAPT/TAU. Phosphorylates CDC25C on 'Ser-216'. Regulates localization and activity of some histone deacetylases by mediating phosphorylation of HDAC7, promoting subsequent interaction between HDAC7 and 14-3-3 and export from the nucleus. Regulates localization and activity of MITF by mediating its phosphorylation, promoting subsequent interaction between MITF and 14-3-3 and retention in the cytosol. Negatively regulates the Hippo signaling pathway and antagonizes the phosphorylation of LATS1. Cooperates with DLG5 to inhibit the kinase activity of STK3/MST2 toward LATS1. Phosphorylates PKP2 and KSR1. This chain is MAP/microtubule affinity-regulating kinase 3 (MARK3), found in Homo sapiens (Human).